Reading from the N-terminus, the 476-residue chain is Bridging integrator 2 (476 aa).

Positions 26-242 (VLQKLGKTVE…MGKLDKQHSS (217 aa)) constitute a BAR domain. 2 disordered regions span residues 269 to 369 (YPCP…TEGA) and 395 to 476 (GAAP…LTPL). A compositionally biased stretch (polar residues) spans 279 to 292 (EPSSGAEQTPTSPR). Residues 310–324 (PAEPGAPMPGPPPAS) are compositionally biased toward pro residues. The segment covering 325 to 339 (PTSVRSASESESECS) has biased composition (low complexity). The segment covering 340–353 (GESREIDLSPKEME) has biased composition (basic and acidic residues). Positions 461–476 (VSCNPPQDPSESLTPL) are enriched in polar residues.

The protein localises to the cytoplasm. The polypeptide is Bridging integrator 2 (BIN2) (Gallus gallus (Chicken)).